We begin with the raw amino-acid sequence, 349 residues long: Probable arabinogalactan endo-beta-1,4-galactanase A (349 aa).

Positions 1 to 15 are cleaved as a signal peptide; that stretch reads MLLSFLPLLPLATAA. The N-linked (GlcNAc...) asparagine glycan is linked to Asn126. The active-site Proton donor is Glu150. Glu261 (nucleophile) is an active-site residue.

Belongs to the glycosyl hydrolase 53 family.

Its subcellular location is the secreted. It carries out the reaction The enzyme specifically hydrolyzes (1-&gt;4)-beta-D-galactosidic linkages in type I arabinogalactans.. Endogalactanase involved in the degradation of plant cell wall polysaccharides, and more particularly of hairy regions of pectin. The polypeptide is Probable arabinogalactan endo-beta-1,4-galactanase A (galA) (Aspergillus terreus (strain NIH 2624 / FGSC A1156)).